A 161-amino-acid polypeptide reads, in one-letter code: Small ribosomal subunit protein uS9 (161 aa).

2 disordered regions span residues Met-1–Pro-28 and Lys-142–Arg-161.

The protein belongs to the universal ribosomal protein uS9 family.

The sequence is that of Small ribosomal subunit protein uS9 from Clavibacter sepedonicus (Clavibacter michiganensis subsp. sepedonicus).